Consider the following 283-residue polypeptide: Shikimate dehydrogenase (NADP(+)) (283 aa).

Shikimate contacts are provided by residues 16–18 (SLS) and Thr63. Lys67 functions as the Proton acceptor in the catalytic mechanism. Residue Asp79 coordinates NADP(+). Residues Asn88 and Asp103 each contribute to the shikimate site. NADP(+) contacts are provided by residues 128–132 (GAGGA), Ala223, and Gly243.

This sequence belongs to the shikimate dehydrogenase family. As to quaternary structure, homodimer.

It carries out the reaction shikimate + NADP(+) = 3-dehydroshikimate + NADPH + H(+). It participates in metabolic intermediate biosynthesis; chorismate biosynthesis; chorismate from D-erythrose 4-phosphate and phosphoenolpyruvate: step 4/7. Its function is as follows. Involved in the biosynthesis of the chorismate, which leads to the biosynthesis of aromatic amino acids. Catalyzes the reversible NADPH linked reduction of 3-dehydroshikimate (DHSA) to yield shikimate (SA). This is Shikimate dehydrogenase (NADP(+)) from Xanthomonas campestris pv. campestris (strain 8004).